A 637-amino-acid chain; its full sequence is tRNA uridine 5-carboxymethylaminomethyl modification enzyme MnmG (637 aa).

FAD contacts are provided by residues 15–20, Ile-127, and Ser-182; that span reads GAGHAG. 276-290 contributes to the NAD(+) binding site; that stretch reads GPRYCPSIEDKIVRF. An FAD-binding site is contributed by Gln-373.

It belongs to the MnmG family. Homodimer. Heterotetramer of two MnmE and two MnmG subunits. Requires FAD as cofactor.

Its subcellular location is the cytoplasm. NAD-binding protein involved in the addition of a carboxymethylaminomethyl (cmnm) group at the wobble position (U34) of certain tRNAs, forming tRNA-cmnm(5)s(2)U34. This Streptococcus pneumoniae (strain ATCC BAA-255 / R6) protein is tRNA uridine 5-carboxymethylaminomethyl modification enzyme MnmG.